The sequence spans 99 residues: NADH-quinone oxidoreductase subunit K (99 aa).

The next 3 membrane-spanning stretches (helical) occupy residues 3–23 (PANY…GVLV), 28–48 (IVVF…LVTF), and 59–79 (VMAF…LAII).

This sequence belongs to the complex I subunit 4L family. NDH-1 is composed of 14 different subunits. Subunits NuoA, H, J, K, L, M, N constitute the membrane sector of the complex.

Its subcellular location is the cell membrane. The catalysed reaction is a quinone + NADH + 5 H(+)(in) = a quinol + NAD(+) + 4 H(+)(out). In terms of biological role, NDH-1 shuttles electrons from NADH, via FMN and iron-sulfur (Fe-S) centers, to quinones in the respiratory chain. The immediate electron acceptor for the enzyme in this species is believed to be a menaquinone. Couples the redox reaction to proton translocation (for every two electrons transferred, four hydrogen ions are translocated across the cytoplasmic membrane), and thus conserves the redox energy in a proton gradient. This Frankia alni (strain DSM 45986 / CECT 9034 / ACN14a) protein is NADH-quinone oxidoreductase subunit K.